Consider the following 113-residue polypeptide: 14 kDa zinc-binding protein (113 aa).

In terms of domain architecture, HIT spans 3 to 113 (IFGKIISKEI…GGRQMNWPPG (111 aa)). Positions 97 to 101 (HIHVH) match the Histidine triad motif motif.

Homodimer.

The chain is 14 kDa zinc-binding protein from Brassica juncea (Indian mustard).